We begin with the raw amino-acid sequence, 378 residues long: Zinc finger protein DPF3 (378 aa).

Lys99 is covalently cross-linked (Glycyl lysine isopeptide (Lys-Gly) (interchain with G-Cter in SUMO2)). A disordered region spans residues 145-193 (VLENDENVEEGNEEEDLEEDIPKRKNRTRGRARGSAGGRRRHDAASQED). The span at 148-163 (NDENVEEGNEEEDLEE) shows a compositional bias: acidic residues. Over residues 168–186 (RKNRTRGRARGSAGGRRRH) the composition is skewed to basic residues. The C2H2-type zinc-finger motif lies at 198-221 (YVCDICGKRYKNRPGLSYHYAHTH). The segment at 225–254 (EEGDEAQDQETRSPPNHRNENHRPQKGPDG) is disordered. 2 PHD-type zinc fingers span residues 259 to 319 (NNYC…CKSC) and 316 to 366 (CKSC…CWEL). The interaction with HDGFL2 stretch occupies residues 317-332 (KSCILCGTSENDDQLL). Gly323 is subject to Phosphoserine.

This sequence belongs to the requiem/DPF family. As to quaternary structure, component of the BAF complex, which includes at least actin (ACTB), ARID1A, ARID1B/BAF250, SMARCA2, SMARCA4/BRG1/BAF190A, ACTL6A/BAF53, ACTL6B/BAF53B, SMARCE1/BAF57, SMARCC1/BAF155, SMARCC2/BAF170, SMARCB1/SNF5/INI1, and one or more of SMARCD1/BAF60A, SMARCD2/BAF60B, or SMARCD3/BAF60C. In muscle cells, the BAF complex also contains DPF3. Interacts with acetylated histones H3 and H4. Component of neuron-specific chromatin remodeling complex (nBAF complex) composed of at least, ARID1A/BAF250A or ARID1B/BAF250B, SMARCD1/BAF60A, SMARCD3/BAF60C, SMARCA2/BRM/BAF190B, SMARCA4/BRG1/BAF190A, SMARCB1/BAF47, SMARCC1/BAF155, SMARCE1/BAF57, SMARCC2/BAF170, DPF1/BAF45B, DPF3/BAF45C, ACTL6B/BAF53B and actin. In terms of assembly, interacts with HDGFL2, SMARCA4/BRG1/BAF190A, SMARCC1/BAF155 and SMARCD1/BAF60A. In terms of processing, phosphorylation at Ser-323 enhances its interaction with HDGFL2.

It is found in the nucleus. In terms of biological role, belongs to the neuron-specific chromatin remodeling complex (nBAF complex). During neural development a switch from a stem/progenitor to a post-mitotic chromatin remodeling mechanism occurs as neurons exit the cell cycle and become committed to their adult state. The transition from proliferating neural stem/progenitor cells to post-mitotic neurons requires a switch in subunit composition of the npBAF and nBAF complexes. As neural progenitors exit mitosis and differentiate into neurons, npBAF complexes which contain ACTL6A/BAF53A and PHF10/BAF45A, are exchanged for homologous alternative ACTL6B/BAF53B and DPF1/BAF45B or DPF3/BAF45C subunits in neuron-specific complexes (nBAF). The npBAF complex is essential for the self-renewal/proliferative capacity of the multipotent neural stem cells. The nBAF complex along with CREST plays a role regulating the activity of genes essential for dendrite growth. Muscle-specific component of the BAF complex, a multiprotein complex involved in transcriptional activation and repression of select genes by chromatin remodeling (alteration of DNA-nucleosome topology). Specifically binds acetylated lysines on histone 3 and 4 (H3K14ac, H3K9ac, H4K5ac, H4K8ac, H4K12ac, H4K16ac). In the complex, it acts as a tissue-specific anchor between histone acetylations and methylations and chromatin remodeling. It thereby probably plays an essential role in heart and skeletal muscle development. Functionally, acts as a regulator of myogenesis in cooperation with HDGFL2. Mediates the interaction of HDGFL2 with the BAF complex. HDGFL2-DPF3a activate myogenic genes by increasing chromatin accessibility through recruitment of SMARCA4/BRG1/BAF190A (ATPase subunit of the BAF complex) to myogenic gene promoters. This Homo sapiens (Human) protein is Zinc finger protein DPF3 (DPF3).